Here is a 226-residue protein sequence, read N- to C-terminus: Killer cell lectin-like receptor subfamily E member 1 (226 aa).

The disordered stretch occupies residues 1-28; sequence MDEAPVTRSTLNVNSQQKSKAKNKIKNT. Over 1–68 the chain is Cytoplasmic; the sequence is MDEAPVTRST…GKGNCSPPWR (68 aa). Polar residues predominate over residues 7–18; sequence TRSTLNVNSQQK. The helical; Signal-anchor for type II membrane protein transmembrane segment at 69–89 threads the bilayer; that stretch reads LLSSVLGAMCLLLMAVAMVMT. Over 90 to 226 the chain is Extracellular; sequence TFTTKSSSER…ANKLTYICKK (137 aa). 3 disulfide bridges follow: Cys-113-Cys-124, Cys-141-Cys-224, and Cys-202-Cys-216. In terms of domain architecture, C-type lectin spans 120 to 225; it reads FRCSCYFFSK…CANKLTYICK (106 aa). N-linked (GlcNAc...) asparagine glycosylation occurs at Asn-145.

Heterodimer; with KLRI1 or KLRI2. As to expression, expressed in natural killer (NK) cells (at protein level). Also detected in natural killer T (NKT) cells (at protein level). Has little or no expression in T cells (at protein level).

The protein resides in the cell membrane. In terms of biological role, lectin-like receptor for natural killer (NK) cells. Can either inhibit or activate NK cell cytotoxic activity, depending on its binding partner. Heterodimer formation with KLRI1 mediates NK cell inhibition whereas heterodimer formation with KLRI2 mediates NK cell activation. Plays a role in allogeneic recognition by the immune system. The protein is Killer cell lectin-like receptor subfamily E member 1 of Mus musculus (Mouse).